The following is a 293-amino-acid chain: Ribulose bisphosphate carboxylase/oxygenase activase, chloroplastic (293 aa).

P75–V82 is a binding site for ATP.

This sequence belongs to the CbxX/CfxQ family. In terms of assembly, forms homooligomers. Forms heterohexameric rings with the nuclear-encoded Rca subunit consisting of 3 of each nuclear- and plastidial-encoded subunits that alternate in the ring.

The protein resides in the plastid. It localises to the chloroplast. Required for the expression of ribulose 1,5-bisphosphate carboxylase/oxygenase (RuBisCo). ATPase involved in the activation of red-type RuBisCo, which tends to form inactive complexes with its substrate ribulose 1,5-bisphosphate (RuBP). Catalyzes the release of RuBP from inhibited RuBisCo in an ATP-dependent manner. Activation of RuBisCO involves the ATP-dependent carboxylation of the epsilon-amino group of lysine leading to a carbamate structure. The nuclear-encoded subunit plays a more critical role in activase function than the plastidial-encoded subunit. This Cyanidioschyzon merolae (strain NIES-3377 / 10D) (Unicellular red alga) protein is Ribulose bisphosphate carboxylase/oxygenase activase, chloroplastic.